A 122-amino-acid chain; its full sequence is Acidic phospholipase A2 1 (122 aa).

Cystine bridges form between cysteine 26–cysteine 115, cysteine 28–cysteine 44, cysteine 43–cysteine 94, cysteine 49–cysteine 122, cysteine 50–cysteine 87, cysteine 57–cysteine 81, and cysteine 75–cysteine 85. Positions 27, 29, and 31 each coordinate Ca(2+). Residue histidine 47 is part of the active site. Aspartate 48 serves as a coordination point for Ca(2+). The active site involves aspartate 88.

It belongs to the phospholipase A2 family. Group II subfamily. D49 sub-subfamily. Homodimer. Ca(2+) serves as cofactor. Expressed by the venom gland.

It is found in the secreted. The enzyme catalyses a 1,2-diacyl-sn-glycero-3-phosphocholine + H2O = a 1-acyl-sn-glycero-3-phosphocholine + a fatty acid + H(+). PLA2 catalyzes the calcium-dependent hydrolysis of the 2-acyl groups in 3-sn-phosphoglycerides. This is Acidic phospholipase A2 1 from Protobothrops mucrosquamatus (Taiwan habu).